The chain runs to 763 residues: MAP7 domain-containing protein 2 (763 aa).

The segment covering 1–11 (MERGGGGGFGT) has biased composition (gly residues). Disordered regions lie at residues 1 to 63 (MERG…KERR), 96 to 124 (WRKLEEQRQREDQKRAAVEEKRKQKLREE), 149 to 268 (SWGA…DVGK), and 300 to 540 (PLRR…KQKE). A compositionally biased stretch (basic and acidic residues) spans 52–63 (SGERQRLAKERR). A coiled-coil region spans residues 54-147 (ERQRLAKERR…RTQQLELKKK (94 aa)). A compositionally biased stretch (polar residues) spans 192 to 206 (ESTNACDKLSTSTMS). Composition is skewed to basic and acidic residues over residues 355–371 (MPKRKAEKEKSNKEREG), 385–400 (ALEKHVVDKHASEKHA), and 430–540 (LAEK…KQKE).

The protein belongs to the MAP7 family. In terms of assembly, interacts (via N-terminus) with microtubules; facilitates microtubule stabilization. Interacts with kinesin-1 family members, KIF5A, KIF5B and KIF5C.

The protein localises to the cytoplasm. Its subcellular location is the cytoskeleton. It localises to the microtubule organizing center. It is found in the centrosome. The protein resides in the midbody. The protein localises to the cell projection. Its subcellular location is the neuron projection. It localises to the axon. Its function is as follows. Microtubule-stabilizing protein involved in the control of cell motility and neurite outgrowth. Acts as a critical cofactor for kinesin transport; in the proximal axon regulates kinesin-1 family members, KIF5A, KIF5B and KIF5C recruitment to microtubules and contributes to kinesin-1-mediated transport in the axons. The polypeptide is MAP7 domain-containing protein 2 (MAP7D2) (Pongo abelii (Sumatran orangutan)).